The primary structure comprises 328 residues: MNRKKIIVAVVIVALLAAIGYGWSYYRQQQDATLTLYGNVDIRTVNLGFRVSGRLASLAVDEGDKIQPGEVLGKLDDGPYVNALKQAQANVQSAQAQLALLKAGYREEEIAQVRSEVSQREAAFSYADSFLKRQQGLWANKATSANELENARTARNQAQANLQASKDKLAQYLSGNRPQEIAQAEANLAQSEAELAQAQLNLQDTTLLSPSGGTVLTRAVEPGTILSASNTVFTLSLTDPVWVRAYVSERHLGQAIPGTEVEVFTDGRPDKPYHGKIGFVSPTAEFTPKSVETPDLRTDLVYRLRIIITDADESLRQGMPVTVRFVQP.

A signal peptide spans 1 to 22 (MNRKKIIVAVVIVALLAAIGYG). Coiled-coil stretches lie at residues 80-109 (YVNA…REEE) and 139-208 (ANKA…TTLL).

This sequence belongs to the UPF0194 family.

It localises to the periplasm. The sequence is that of UPF0194 membrane protein YE2891 from Yersinia enterocolitica serotype O:8 / biotype 1B (strain NCTC 13174 / 8081).